Consider the following 521-residue polypeptide: Bifunctional purine biosynthesis protein PurH (521 aa).

One can recognise an MGS-like domain in the interval 1-145 (MIKQALISVS…KNHRDVTVVV (145 aa)).

The protein belongs to the PurH family.

The enzyme catalyses (6R)-10-formyltetrahydrofolate + 5-amino-1-(5-phospho-beta-D-ribosyl)imidazole-4-carboxamide = 5-formamido-1-(5-phospho-D-ribosyl)imidazole-4-carboxamide + (6S)-5,6,7,8-tetrahydrofolate. The catalysed reaction is IMP + H2O = 5-formamido-1-(5-phospho-D-ribosyl)imidazole-4-carboxamide. The protein operates within purine metabolism; IMP biosynthesis via de novo pathway; 5-formamido-1-(5-phospho-D-ribosyl)imidazole-4-carboxamide from 5-amino-1-(5-phospho-D-ribosyl)imidazole-4-carboxamide (10-formyl THF route): step 1/1. It functions in the pathway purine metabolism; IMP biosynthesis via de novo pathway; IMP from 5-formamido-1-(5-phospho-D-ribosyl)imidazole-4-carboxamide: step 1/1. The polypeptide is Bifunctional purine biosynthesis protein PurH (Burkholderia lata (strain ATCC 17760 / DSM 23089 / LMG 22485 / NCIMB 9086 / R18194 / 383)).